Reading from the N-terminus, the 904-residue chain is Leucine--tRNA ligase (904 aa).

Positions 49–59 match the 'HIGH' region motif; it reads PYPSGDLHIGH. A 'KMSKS' region motif is present at residues 663 to 667; sequence TMSKS. An ATP-binding site is contributed by Lys-666.

It belongs to the class-I aminoacyl-tRNA synthetase family.

It is found in the cytoplasm. The catalysed reaction is tRNA(Leu) + L-leucine + ATP = L-leucyl-tRNA(Leu) + AMP + diphosphate. This is Leucine--tRNA ligase from Roseiflexus castenholzii (strain DSM 13941 / HLO8).